Reading from the N-terminus, the 342-residue chain is Glycerol-1-phosphate dehydrogenase [NAD(P)+] (342 aa).

Residues 84-88 and 106-109 each bind NAD(+); these read GRPLD and TSAS. D111 contacts substrate. S115 contacts NAD(+). D160 contributes to the substrate binding site. 2 residues coordinate Zn(2+): D160 and H241. H245 contributes to the substrate binding site. Zn(2+) is bound at residue H260.

Belongs to the glycerol-1-phosphate dehydrogenase family. Homodimer. Zn(2+) is required as a cofactor.

The protein localises to the cytoplasm. The catalysed reaction is sn-glycerol 1-phosphate + NAD(+) = dihydroxyacetone phosphate + NADH + H(+). It catalyses the reaction sn-glycerol 1-phosphate + NADP(+) = dihydroxyacetone phosphate + NADPH + H(+). The protein operates within membrane lipid metabolism; glycerophospholipid metabolism. Catalyzes the NAD(P)H-dependent reduction of dihydroxyacetonephosphate (DHAP or glycerone phosphate) to glycerol 1-phosphate (G1P). The G1P thus generated is used as the glycerophosphate backbone of phospholipids in the cellular membranes of Archaea. The chain is Glycerol-1-phosphate dehydrogenase [NAD(P)+] from Pyrobaculum neutrophilum (strain DSM 2338 / JCM 9278 / NBRC 100436 / V24Sta) (Thermoproteus neutrophilus).